The chain runs to 365 residues: MQIVYLFSSVLLTAALAHENGKVAYPFRLFNGTSSVEEISQQDQMDAPKIMPHVNATTFEWWYFDAVSTTSQNESLTVMFENMGPEGLGAPYPGGPLAVQISGSFSNGTAFTIITAATKGAVLEWGGGGVRGEWRGAGSSFAGKDHREYTVSIANPGIGVYGTMTLRSVSPPRYPCDVKERRASEQLIPNMYLANSQPDAIVEVDFNINESTLKFSGIGYHDLSWGSAPLESSVHSWYWGHGRLGRYSLVWFDVMGRDGKEYFSAWITEAGNVILCGCEPDSVLVRPWGENSGFPPGRGTPAPSGYSLRYDLGQNQIFIANFTREVNIIDNDFTKHIIGLFSGGFEGGEQYEGRAMADQFQFGDL.

It belongs to the quinolone epoxide rearrangement protein penF family.

The catalysed reaction is (1'E,3'E)-5-(3,3-dimethyloxiran-2-yl)-3-methylhexa-1,3-dienyl-quinolinone B = aspoquinolone A. It carries out the reaction (1'E,3'E)-5-(3,3-dimethyloxiran-2-yl)-3-methylhexa-1,3-dienyl-quinolinone B = aspoquinolone B. It functions in the pathway secondary metabolite biosynthesis. It participates in alkaloid biosynthesis. Its pathway is mycotoxin biosynthesis. Quinolone epoxide rearrangement protein; part of the gene cluster that mediates the biosynthesis of the aspoquinolone mycotoxins. Within the pathway, asqO catalyzes an enzymatic 3-exo-tet cyclization to yield the cyclopropyl-THF ring system in aspoquinolone. The first step of the pathway is catalyzed by the nonribosomal peptide synthetase asqK that condenses anthranilic acid and O-methyl-L-tyrosine to produce 4'-methoxycyclopeptin. 4'-methoxycyclopeptin is then converted to 4'-methoxydehydrocyclopeptin by the ketoglutarate-dependent dioxygenase asqJ. AsqJ also converts its first product 4'-methoxydehydrocyclopeptin to 4'-methoxycyclopenin. The following conversion of 4'-methoxycyclopenin into 4'-methoxyviridicatin is catalyzed by the cyclopenase asqI. 4'-methoxyviridicatin is the precursor of quinolone natural products, and is further converted to quinolinone B. The prenyltransferase asqH1 then catalyzes the canonical Friedel-Crafts alkylation of quinolinone B with dimethylallyl cation to yield dimethylallyl quinolone, which is subjected to FAD-dependent dehydrogenation by the FAD-linked oxidoreductase asqF to yield conjugated aryl diene. The delta(3') double bond then serves as the site of the second alkylation with DMAPP catalyzed by the prenyltransferase asqH2 to yield a carbenium ion intermediate, which can be attacked by H(2)O to yield a styrenyl quinolone containing a C3'-hydroxyprenyl chain. The FAD-dependent monooxygenase asqG performs epoxidation of the terminal C7'-C8' olefin. Finally, after dehydratation of the epoxide at C3 by asqC, the quinolone epoxide rearrangement protein asqO catalyzes an enzymatic 3-exo-tet cyclization to yield the cyclopropyl-THF ring system in aspoquinolone. The sequence is that of Quinolone epoxide rearrangement protein asqO from Emericella nidulans (strain FGSC A4 / ATCC 38163 / CBS 112.46 / NRRL 194 / M139) (Aspergillus nidulans).